The following is a 338-amino-acid chain: 1-aminocyclopropane-1-carboxylate deaminase (338 aa).

An N6-(pyridoxal phosphate)lysine modification is found at lysine 51. The active-site Nucleophile is the serine 78.

Belongs to the ACC deaminase/D-cysteine desulfhydrase family. As to quaternary structure, homotrimer. The cofactor is pyridoxal 5'-phosphate.

The enzyme catalyses 1-aminocyclopropane-1-carboxylate + H2O = 2-oxobutanoate + NH4(+). Functionally, catalyzes a cyclopropane ring-opening reaction, the irreversible conversion of 1-aminocyclopropane-1-carboxylate (ACC) to ammonia and alpha-ketobutyrate. Allows growth on ACC as a nitrogen source. The protein is 1-aminocyclopropane-1-carboxylate deaminase of Burkholderia lata (strain ATCC 17760 / DSM 23089 / LMG 22485 / NCIMB 9086 / R18194 / 383).